Here is a 329-residue protein sequence, read N- to C-terminus: Protein-arginine N-acetylglucosaminyltransferase NleB1 (329 aa).

N-beta-linked (GlcNAc) arginine; by autocatalysis glycosylation is present at Arg13. Residue 48–50 participates in UDP-N-acetyl-alpha-D-glucosamine binding; the sequence is QWF. The N-beta-linked (GlcNAc) arginine; by autocatalysis glycan is linked to Arg53. Tyr72 contacts UDP-N-acetyl-alpha-D-glucosamine. Arg159 carries an N-beta-linked (GlcNAc) arginine; by autocatalysis glycan. 219–222 is a binding site for UDP-N-acetyl-alpha-D-glucosamine; it reads YLDA. A DXD motif motif is present at residues 221–223; the sequence is DAD. Residue Asp223 participates in Mn(2+) binding. The active-site Proton acceptor is Glu253. The N-beta-linked (GlcNAc) arginine; by autocatalysis glycan is linked to Arg293. Asn320 and Ser322 together coordinate Mn(2+). UDP-N-acetyl-alpha-D-glucosamine is bound by residues Ser322 and 327-329; that span reads SSW.

The protein belongs to the glycosyltransferase NleB family. It depends on Mn(2+) as a cofactor. Auto-glycosylated: arginine GlcNAcylation is required for activity toward death domain-containing host target proteins.

It is found in the secreted. The protein resides in the host cytoplasm. It catalyses the reaction L-arginyl-[protein] + UDP-N-acetyl-alpha-D-glucosamine = N(omega)-(N-acetyl-beta-D-glucosaminyl)-L-arginyl-[protein] + UDP + H(+). Its function is as follows. Protein-arginine N-acetylglucosaminyltransferase effector that disrupts TNF signaling in infected cells, including NF-kappa-B signaling, apoptosis and necroptosis. Acts by catalyzing the transfer of a single N-acetylglucosamine (GlcNAc) to a conserved arginine residue in the death domain of host proteins FADD, TRADD, FAS, TNFRSF1A/TNFR1, TNFRSF25/DR3 and RIPK1: arginine GlcNAcylation prevents homotypic/heterotypic death domain interactions and assembly of the oligomeric TNF-alpha receptor complex, thereby disrupting TNF signaling. Has preference for host FADD as substrate compared to other death domain-containing proteins. Also acts on host proteins without a death domain: catalyzes arginine GlcNAcylation of HIF1A, thereby regulating host glucose metabolism. Also displays intra-bacterial activity by mediating GlcNAcylation of glutathione synthetase GshB. Catalyzes auto-GlcNAcylation, which is required for activity toward death domain-containing host target proteins. Shows a higher enzymatic activity than NleB2. The chain is Protein-arginine N-acetylglucosaminyltransferase NleB1 from Escherichia coli O127:H6 (strain E2348/69 / EPEC).